A 181-amino-acid chain; its full sequence is Sodium/potassium-transporting ATPase subunit beta-1-interacting protein 3 (181 aa).

4 helical membrane passes run 2-22, 35-55, 62-82, and 152-172; these read GCCT…LSAL, APIL…FGTI, IMVY…IICF, and VQIL…SISM.

The protein belongs to the NKAIN family. In terms of assembly, interacts with ATP1B1. In terms of tissue distribution, detected in the brain only and specifically in neurons. Expressed in multiple regions such as cerebral cortex, thalamus, hippocampus, olfactory bulb and brainstem as well as in cerebellum with low expression in granular cell layer.

It localises to the cell membrane. This Mus musculus (Mouse) protein is Sodium/potassium-transporting ATPase subunit beta-1-interacting protein 3 (Nkain3).